The chain runs to 80 residues: Raniseptin-4 (80 aa).

Positions 1 to 22 (MAFLKKSLFLVLFLGIVSLSIC) are cleaved as a signal peptide. A propeptide spanning residues 23-49 (EEEKREGEEEEKQEEENEELSEEELRD) is cleaved from the precursor.

The protein belongs to the frog skin active peptide (FSAP) family. Dermaseptin subfamily. As to expression, expressed by the skin glands.

It is found in the secreted. Functionally, has antibacterial activity. This chain is Raniseptin-4, found in Boana raniceps (Chaco tree frog).